The chain runs to 91 residues: MKLSNVFLAAVVILTCVCVFQITAVPFIQQVQDEHHVESEELQENQHLTEAEHRQTDPLVLFRTKRQSHLSLCRFCCKCCRNKGCGYCCKF.

The first 24 residues, M1–A24, serve as a signal peptide directing secretion. The propeptide occupies V25–T64. 4 disulfides stabilise this stretch: C73/C89, C76/C79, C77/C85, and C80/C88.

It belongs to the hepcidin family.

It localises to the secreted. Its function is as follows. Seems to act as a signaling molecule involved in the maintenance of iron homeostasis. Seems to be required in conjunction with HFE to regulate both intestinal iron absorption and iron storage in macrophages. May also have antimicrobial activity. The protein is Hepcidin-1 (hamp1) of Danio rerio (Zebrafish).